The following is a 677-amino-acid chain: Nuclear fusion protein FUS2 (677 aa).

Thr-20 is subject to Phosphothreonine. Residues Ser-67, Ser-72, and Ser-84 each carry the phosphoserine modification. Thr-88 carries the post-translational modification Phosphothreonine. Residues Ser-100 and Ser-106 each carry the phosphoserine modification. In terms of domain architecture, DH spans Lys-112–Glu-326.

The protein localises to the cell tip. Functionally, promotes cell fusion during zygote formation. The chain is Nuclear fusion protein FUS2 (FUS2) from Saccharomyces cerevisiae (strain ATCC 204508 / S288c) (Baker's yeast).